A 277-amino-acid chain; its full sequence is MENTENSVDAKSFKNAETKILHGSKSMDSGMSFDNSYKMDYPEMGLCIIINNKNFHKSTGMAPRSGTDVDAANLRETFTNLKYEVRNKNDLTCEEILELMNSVSKEDHSKRSSFVCVLLSHGDEGIIFGTNGPVDLRKVTGFFRGDYCRSLTGKPKLFIIQACRGTELDCGIETDSGIEDDMACQKIPVEADFLYAYSTAPGYYSWRNSKDGSWFIQSLCAMLKLYAHKLEFMHILTRVNRKVATEFESFSLDSAFHGKKQIPCIVSMLTKELYLYH.

Position 1 is an N-acetylmethionine (methionine 1). Propeptides lie at residues 1–9 (MENTENSVD) and 10–28 (AKSF…KSMD). Lysine 11 bears the N6-acetyllysine mark. A Phosphoserine modification is found at serine 26. Active-site residues include histidine 121 and cysteine 163. The residue at position 163 (cysteine 163) is an S-nitrosocysteine; in inhibited form.

Belongs to the peptidase C14A family. In terms of assembly, heterotetramer that consists of two anti-parallel arranged heterodimers, each one formed by a 17 kDa (p17) and a 12 kDa (p12) subunit. Interacts with BIRC6/bruce. Post-translationally, cleavage by granzyme B, caspase-6, caspase-8 and caspase-10 generates the two active subunits. Additional processing of the propeptides is likely due to the autocatalytic activity of the activated protease. Active heterodimers between the small subunit of caspase-7 protease and the large subunit of caspase-3 also occur and vice versa. S-nitrosylated on its catalytic site cysteine in unstimulated cell lines and denitrosylated upon activation of the Fas apoptotic pathway, associated with an increase in intracellular caspase activity. Fas therefore activates caspase-3 not only by inducing the cleavage of the caspase zymogen to its active subunits, but also by stimulating the denitrosylation of its active site thiol. In terms of processing, ubiquitinated by BIRC6; this activity is inhibited by DIABLO/SMAC.

The protein localises to the cytoplasm. It carries out the reaction Strict requirement for an Asp residue at positions P1 and P4. It has a preferred cleavage sequence of Asp-Xaa-Xaa-Asp-|- with a hydrophobic amino-acid residue at P2 and a hydrophilic amino-acid residue at P3, although Val or Ala are also accepted at this position.. Its activity is regulated as follows. Inhibited by BIRC6; following inhibition of BIRC6-caspase binding by DIABLO/SMAC, BIRC6 is subjected to caspase cleavage, leading to an increase in active caspases. Involved in the activation cascade of caspases responsible for apoptosis execution. At the onset of apoptosis, it proteolytically cleaves poly(ADP-ribose) polymerase PARP1 at a '216-Asp-|-Gly-217' bond. Cleaves and activates sterol regulatory element binding proteins (SREBPs) between the basic helix-loop-helix leucine zipper domain and the membrane attachment domain. Cleaves and activates caspase-6, -7 and -9 (CASP6, CASP7 and CASP9, respectively). Cleaves and inactivates interleukin-18 (IL18). Triggers cell adhesion in sympathetic neurons through RET cleavage. Cleaves IL-1 beta between an Asp and an Ala, releasing the mature cytokine which is involved in a variety of inflammatory processes. Cleaves and inhibits serine/threonine-protein kinase AKT1 in response to oxidative stress. Acts as an inhibitor of type I interferon production during virus-induced apoptosis by mediating cleavage of antiviral proteins CGAS, IRF3 and MAVS, thereby preventing cytokine overproduction. Also involved in pyroptosis by mediating cleavage and activation of gasdermin-E (GSDME). Cleaves XRCC4 and phospholipid scramblase proteins XKR4, XKR8 and XKR9, leading to promote phosphatidylserine exposure on apoptotic cell surface. Cleaves BIRC6 following inhibition of BIRC6-caspase binding by DIABLO/SMAC. The polypeptide is Caspase-3 (CASP3) (Canis lupus familiaris (Dog)).